Here is a 318-residue protein sequence, read N- to C-terminus: Protein OPG137 (318 aa).

Residues 145-172 (VYDKDKRIQMLEDEVVNLRNQRSNTKSS) adopt a coiled-coil conformation.

The protein belongs to the orthopoxvirus OPG137 family. As to quaternary structure, homomultimer. Interacts with OPG160. In terms of processing, phosphorylated by a OPG054-independent mechanism.

The protein localises to the host cytoplasm. Required for viral crescent formation early during virus morphogenesis. The protein is Protein OPG137 (OPG137) of Vaccinia virus (strain Ankara) (VACV).